The chain runs to 476 residues: UDP-N-acetylmuramate--L-alanine ligase (476 aa).

Residue 115–121 (GTHGKTT) participates in ATP binding.

This sequence belongs to the MurCDEF family.

Its subcellular location is the cytoplasm. It carries out the reaction UDP-N-acetyl-alpha-D-muramate + L-alanine + ATP = UDP-N-acetyl-alpha-D-muramoyl-L-alanine + ADP + phosphate + H(+). The protein operates within cell wall biogenesis; peptidoglycan biosynthesis. Its function is as follows. Cell wall formation. This chain is UDP-N-acetylmuramate--L-alanine ligase, found in Paramagnetospirillum magneticum (strain ATCC 700264 / AMB-1) (Magnetospirillum magneticum).